Reading from the N-terminus, the 391-residue chain is NADH-quinone oxidoreductase subunit D (391 aa).

The protein belongs to the complex I 49 kDa subunit family. In terms of assembly, NDH-1 is composed of 14 different subunits. Subunits NuoB, C, D, E, F, and G constitute the peripheral sector of the complex.

The protein resides in the cell inner membrane. The catalysed reaction is a quinone + NADH + 5 H(+)(in) = a quinol + NAD(+) + 4 H(+)(out). In terms of biological role, NDH-1 shuttles electrons from NADH, via FMN and iron-sulfur (Fe-S) centers, to quinones in the respiratory chain. The immediate electron acceptor for the enzyme in this species is believed to be ubiquinone. Couples the redox reaction to proton translocation (for every two electrons transferred, four hydrogen ions are translocated across the cytoplasmic membrane), and thus conserves the redox energy in a proton gradient. This Rickettsia conorii (strain ATCC VR-613 / Malish 7) protein is NADH-quinone oxidoreductase subunit D.